The chain runs to 230 residues: Ribonuclease 3 (230 aa).

The RNase III domain occupies 19–134 (ELLTIALTHR…LLGAIYLEHG (116 aa)). Glu-44 contributes to the Mg(2+) binding site. Asp-48 is a catalytic residue. Positions 120 and 123 each coordinate Mg(2+). The DRBM domain occupies 161-229 (DWKSSLQELT…AASAYKTLDE (69 aa)).

The protein belongs to the ribonuclease III family. In terms of assembly, homodimer. The cofactor is Mg(2+).

It localises to the cytoplasm. It catalyses the reaction Endonucleolytic cleavage to 5'-phosphomonoester.. Digests double-stranded RNA. Involved in the processing of primary rRNA transcript to yield the immediate precursors to the all rRNAs (23S, 16S and 5S). Processes some mRNAs, and tRNAs when they are encoded in the rRNA operon. Processes pre-crRNA and tracrRNA of type II CRISPR loci if present in the organism. The polypeptide is Ribonuclease 3 (rnc) (Mycolicibacterium smegmatis (strain ATCC 700084 / mc(2)155) (Mycobacterium smegmatis)).